The following is a 59-amino-acid chain: Large ribosomal subunit protein uL30 (59 aa).

It belongs to the universal ribosomal protein uL30 family. As to quaternary structure, part of the 50S ribosomal subunit.

In Ruminiclostridium cellulolyticum (strain ATCC 35319 / DSM 5812 / JCM 6584 / H10) (Clostridium cellulolyticum), this protein is Large ribosomal subunit protein uL30.